Here is a 126-residue protein sequence, read N- to C-terminus: MSKVPINSSKLSCGGPYNQAVKSGGLIFCSGQAAVKDGNFVPGTIQEQTRLTIENLAEVLRVAGSSLEKLVKVNIFLTDIDDFAAMNEVYKEMLPDPMPARTTVAAGKIPLSSKGGKIEIECIAAE.

This sequence belongs to the RutC family.

It is found in the mitochondrion. It localises to the cytoplasm. Its function is as follows. Plays a role in the maintenance of mitochondrial DNA. In Schizosaccharomyces pombe (strain 972 / ATCC 24843) (Fission yeast), this protein is Protein mmf2, mitochondrial (mmf2).